The primary structure comprises 122 residues: MVHMHITAWALGLILFFVAYSLYSAGRKGKGVHMGLRLMYIIIIVTGFMLYMSIVKTATGSMHMWYGMKMLAGILVIAGMEMVLVKMSKNKPTGAVWGLFIVALVAVLYLGLKLPLGWYVFK.

Helical transmembrane passes span 6–26, 38–58, 65–85, and 92–112; these read ITAW…YSAG, LMYI…VKTA, WYGM…MVLV, and PTGA…YLGL.

The protein belongs to the UPF0344 family.

It is found in the cell membrane. This Bacillus mycoides (strain KBAB4) (Bacillus weihenstephanensis) protein is UPF0344 protein BcerKBAB4_1054.